The sequence spans 889 residues: Alanine--tRNA ligase (889 aa).

The Zn(2+) site is built by histidine 564, histidine 568, cysteine 677, and histidine 681.

The protein belongs to the class-II aminoacyl-tRNA synthetase family. Zn(2+) serves as cofactor.

The protein resides in the cytoplasm. It catalyses the reaction tRNA(Ala) + L-alanine + ATP = L-alanyl-tRNA(Ala) + AMP + diphosphate. Its function is as follows. Catalyzes the attachment of alanine to tRNA(Ala) in a two-step reaction: alanine is first activated by ATP to form Ala-AMP and then transferred to the acceptor end of tRNA(Ala). Also edits incorrectly charged Ser-tRNA(Ala) and Gly-tRNA(Ala) via its editing domain. In Rhodopseudomonas palustris (strain ATCC BAA-98 / CGA009), this protein is Alanine--tRNA ligase.